Reading from the N-terminus, the 97-residue chain is Class II hydrophobin 1 (97 aa).

Positions 1–16 (MKFFAIAALFAAAAVA) are cleaved as a signal peptide. A propeptide spanning residues 17 to 22 (QPLEDR) is cleaved from the precursor. 4 disulfides stabilise this stretch: cysteine 30/cysteine 79, cysteine 40/cysteine 70, cysteine 41/cysteine 53, and cysteine 80/cysteine 91.

It belongs to the cerato-ulmin hydrophobin family. Homotetramer. Further self-assembles to form highly ordered films at water-air interfaces through intermolecular interactions.

Its subcellular location is the secreted. It localises to the cell wall. In terms of biological role, aerial growth, conidiation, and dispersal of filamentous fungi in the environment rely upon a capability of their secreting small amphipathic proteins called hydrophobins (HPBs) with low sequence identity. Class I can self-assemble into an outermost layer of rodlet bundles on aerial cell surfaces, conferring cellular hydrophobicity that supports fungal growth, development and dispersal; whereas Class II form highly ordered films at water-air interfaces through intermolecular interactions but contribute nothing to the rodlet structure. Hbf1 is a class II hydrophobin that has a role in hyphal development and is in particular required for the formation of aerial hyphae. This chain is Class II hydrophobin 1, found in Hypocrea jecorina (Trichoderma reesei).